A 214-amino-acid polypeptide reads, in one-letter code: Exosome complex component RRP46 homolog (214 aa).

It belongs to the RNase PH family. As to quaternary structure, homodimer. Component of the RNA exosome complex. Interacts with crn-4; interaction promotes the DNase activity of crn-4. Interacts with crn-3, cps-6 and cyn-13.

Its subcellular location is the cytoplasm. It localises to the nucleus. Non-catalytic component of the RNA exosome complex which has 3'-&gt;5' exoribonuclease activity and participates in a multitude of cellular RNA processing and degradation events. Involved in apoptotic DNA degradation. In vitro, does not bind or digest single-stranded RNA. In vitro, binds to double-stranded DNA without detectable DNase activity. The polypeptide is Exosome complex component RRP46 homolog (Caenorhabditis elegans).